A 133-amino-acid chain; its full sequence is Phosphoribosyl-AMP cyclohydrolase (133 aa).

Asp-77 serves as a coordination point for Mg(2+). Cys-78 contacts Zn(2+). 2 residues coordinate Mg(2+): Asp-79 and Asp-81. Residues Cys-95 and Cys-102 each coordinate Zn(2+).

Belongs to the PRA-CH family. Homodimer. Mg(2+) is required as a cofactor. Zn(2+) serves as cofactor.

It is found in the cytoplasm. It carries out the reaction 1-(5-phospho-beta-D-ribosyl)-5'-AMP + H2O = 1-(5-phospho-beta-D-ribosyl)-5-[(5-phospho-beta-D-ribosylamino)methylideneamino]imidazole-4-carboxamide. It participates in amino-acid biosynthesis; L-histidine biosynthesis; L-histidine from 5-phospho-alpha-D-ribose 1-diphosphate: step 3/9. Functionally, catalyzes the hydrolysis of the adenine ring of phosphoribosyl-AMP. This Thiobacillus denitrificans (strain ATCC 25259 / T1) protein is Phosphoribosyl-AMP cyclohydrolase.